We begin with the raw amino-acid sequence, 85 residues long: Selenoprotein W (85 aa).

Residues Cys10–Sec13 constitute a cross-link (cysteinyl-selenocysteine (Cys-Sec); redox-active). Position 13 (Sec13) is a non-standard amino acid, selenocysteine.

This sequence belongs to the SelWTH family. Selenoprotein W subfamily. In terms of tissue distribution, expressed ubiquitously with predominant expression in the pituitary, spinal cord, sciatic nerve, cerebral cortex, cerebral nuclei, thalamus, cerebellum, muscle, cartilage, trachea, gizzard and artery. Weakly expressed in pancreas, testis, ovary, kidney and veins.

It is found in the cytoplasm. Plays a role as a glutathione (GSH)-dependent antioxidant. May be involved in a redox-related process. May play a role in the myopathies of selenium deficiency. The chain is Selenoprotein W from Gallus gallus (Chicken).